We begin with the raw amino-acid sequence, 206 residues long: Large ribosomal subunit protein uL3 (206 aa).

A disordered region spans residues 126–155 (HGHAGGPGAHGSRFHRHPGSMGANSTPSRV).

Belongs to the universal ribosomal protein uL3 family. Part of the 50S ribosomal subunit. Forms a cluster with proteins L14 and L19.

Functionally, one of the primary rRNA binding proteins, it binds directly near the 3'-end of the 23S rRNA, where it nucleates assembly of the 50S subunit. In Leptospira interrogans serogroup Icterohaemorrhagiae serovar copenhageni (strain Fiocruz L1-130), this protein is Large ribosomal subunit protein uL3.